A 231-amino-acid polypeptide reads, in one-letter code: Ribose-5-phosphate isomerase A (231 aa).

Substrate-binding positions include 28–31 (TGST), 83–86 (DGAD), and 96–99 (KGGG). The active-site Proton acceptor is Glu-105. Residue Lys-123 coordinates substrate.

The protein belongs to the ribose 5-phosphate isomerase family. In terms of assembly, homodimer.

The enzyme catalyses aldehydo-D-ribose 5-phosphate = D-ribulose 5-phosphate. Its pathway is carbohydrate degradation; pentose phosphate pathway; D-ribose 5-phosphate from D-ribulose 5-phosphate (non-oxidative stage): step 1/1. Functionally, catalyzes the reversible conversion of ribose-5-phosphate to ribulose 5-phosphate. The protein is Ribose-5-phosphate isomerase A of Rhizobium meliloti (strain 1021) (Ensifer meliloti).